Consider the following 431-residue polypeptide: Trigger factor (431 aa).

Positions 158–243 constitute a PPIase FKBP-type domain; the sequence is GYLVALETWS…VIEVSEPVLL (86 aa).

It belongs to the FKBP-type PPIase family. Tig subfamily.

It localises to the cytoplasm. It catalyses the reaction [protein]-peptidylproline (omega=180) = [protein]-peptidylproline (omega=0). Involved in protein export. Acts as a chaperone by maintaining the newly synthesized protein in an open conformation. Functions as a peptidyl-prolyl cis-trans isomerase. The polypeptide is Trigger factor (Xylella fastidiosa (strain M23)).